Consider the following 232-residue polypeptide: Rho-related GTP-binding protein Rho6 (232 aa).

GTP is bound by residues 23 to 28 (QCGKTA), 38 to 45 (YPETYVPT), 67 to 71 (DTSGS), 125 to 128 (CKTD), and 169 to 170 (AF). Positions 42 to 50 (YVPTVFENY) match the Effector region motif. Cys-229 is subject to Cysteine methyl ester. Residue Cys-229 is the site of S-geranylgeranyl cysteine attachment. The propeptide at 230-232 (SIM) is removed in mature form.

This sequence belongs to the small GTPase superfamily. Rho family. Binds GRB7 and PLXNB1. Interacts with PLXNA2. Interacts with UBXD5.

The protein resides in the cell membrane. It localises to the cytoplasm. It is found in the cytoskeleton. Its function is as follows. Lacks intrinsic GTPase activity. Has a low affinity for GDP, and constitutively binds GTP. Controls rearrangements of the actin cytoskeleton. Induces the Rac-dependent neuritic process formation in part by disruption of the cortical actin filaments. Causes the formation of many neuritic processes from the cell body with disruption of the cortical actin filaments. The sequence is that of Rho-related GTP-binding protein Rho6 (RND1) from Bos taurus (Bovine).